The following is a 208-amino-acid chain: Probable thymidylate kinase (208 aa).

Residue 9–16 coordinates ATP; sequence GIDGAGKS.

It belongs to the thymidylate kinase family.

It carries out the reaction dTMP + ATP = dTDP + ADP. This Thermococcus gammatolerans (strain DSM 15229 / JCM 11827 / EJ3) protein is Probable thymidylate kinase.